The sequence spans 320 residues: MKQEKHGVLLVNLGTPDAPTSSAVKRYLKEFLSDDRVVDTAPLIWWPILNGAILPIRSPRVAKLYQSVWMDEGSPLLVYSRRQQRALAARMPNTPVELGMSYGSPSLAEAIDKLLAQGVTNLVVLPLYPQYSCSTSAAVWDGVARILKGYRRLPSVSFIRDYAEHPAYIAALRQSVEHSFAEHGQPDRLVLSFHGIPKRYARLGDDYPQRCEDTLRALTATLPLAPERVMMTYQSRFGREPWLTPYTDETLKGLPAQGVKHIQLICPGFSADCLETLEEIKEQNREIFLKAGGEKFEYISALNDEPAHIDMMQQLVAQRF.

H194 and E275 together coordinate Fe cation.

This sequence belongs to the ferrochelatase family.

It is found in the cytoplasm. It carries out the reaction heme b + 2 H(+) = protoporphyrin IX + Fe(2+). It functions in the pathway porphyrin-containing compound metabolism; protoheme biosynthesis; protoheme from protoporphyrin-IX: step 1/1. Functionally, catalyzes the ferrous insertion into protoporphyrin IX. The chain is Ferrochelatase from Serratia proteamaculans (strain 568).